We begin with the raw amino-acid sequence, 266 residues long: 5'-nucleotidase SurE (266 aa).

Positions 10, 11, 41, and 97 each coordinate a divalent metal cation.

It belongs to the SurE nucleotidase family. A divalent metal cation serves as cofactor.

The protein localises to the cytoplasm. It carries out the reaction a ribonucleoside 5'-phosphate + H2O = a ribonucleoside + phosphate. Its function is as follows. Nucleotidase that shows phosphatase activity on nucleoside 5'-monophosphates. This is 5'-nucleotidase SurE from Methanocella arvoryzae (strain DSM 22066 / NBRC 105507 / MRE50).